The sequence spans 237 residues: Uracil-DNA glycosylase (237 aa).

Aspartate 77 (proton acceptor) is an active-site residue.

It belongs to the uracil-DNA glycosylase (UDG) superfamily. UNG family.

The protein localises to the cytoplasm. It catalyses the reaction Hydrolyzes single-stranded DNA or mismatched double-stranded DNA and polynucleotides, releasing free uracil.. In terms of biological role, excises uracil residues from the DNA which can arise as a result of misincorporation of dUMP residues by DNA polymerase or due to deamination of cytosine. In Acinetobacter baumannii (strain ACICU), this protein is Uracil-DNA glycosylase.